The sequence spans 579 residues: Arginine--tRNA ligase (579 aa).

Positions 127–137 match the 'HIGH' region motif; sequence PNLAKEMHVGH.

This sequence belongs to the class-I aminoacyl-tRNA synthetase family. Monomer.

It is found in the cytoplasm. The enzyme catalyses tRNA(Arg) + L-arginine + ATP = L-arginyl-tRNA(Arg) + AMP + diphosphate. This chain is Arginine--tRNA ligase, found in Stutzerimonas stutzeri (strain A1501) (Pseudomonas stutzeri).